Reading from the N-terminus, the 241-residue chain is 2-C-methyl-D-erythritol 4-phosphate cytidylyltransferase (241 aa).

The protein belongs to the IspD/TarI cytidylyltransferase family. IspD subfamily.

The enzyme catalyses 2-C-methyl-D-erythritol 4-phosphate + CTP + H(+) = 4-CDP-2-C-methyl-D-erythritol + diphosphate. Its pathway is isoprenoid biosynthesis; isopentenyl diphosphate biosynthesis via DXP pathway; isopentenyl diphosphate from 1-deoxy-D-xylulose 5-phosphate: step 2/6. Functionally, catalyzes the formation of 4-diphosphocytidyl-2-C-methyl-D-erythritol from CTP and 2-C-methyl-D-erythritol 4-phosphate (MEP). In Hahella chejuensis (strain KCTC 2396), this protein is 2-C-methyl-D-erythritol 4-phosphate cytidylyltransferase.